Consider the following 84-residue polypeptide: Small ribosomal subunit protein bS18 (84 aa).

Belongs to the bacterial ribosomal protein bS18 family. In terms of assembly, part of the 30S ribosomal subunit. Forms a tight heterodimer with protein bS6.

Binds as a heterodimer with protein bS6 to the central domain of the 16S rRNA, where it helps stabilize the platform of the 30S subunit. This Methylorubrum extorquens (strain CM4 / NCIMB 13688) (Methylobacterium extorquens) protein is Small ribosomal subunit protein bS18.